The chain runs to 479 residues: GTPase Obg (479 aa).

Positions 2–159 constitute an Obg domain; sequence PRFVDRVVIH…RDLTLELKSV (158 aa). The OBG-type G domain maps to 160–341; it reads ADVGLIGFPS…LIFGLWQMIS (182 aa). Residues 166–173, 191–195, 212–215, 292–295, and 322–324 each bind GTP; these read GFPSAGKS, FTTLV, DVPG, NKID, and STV. Residues serine 173 and threonine 193 each contribute to the Mg(2+) site. In terms of domain architecture, OCT spans 359-437; sequence PVPVDDSGFT…IGGMTFDWEP (79 aa). A disordered region spans residues 438–479; it reads QKPAGHPVAMSGRGTDARLESTDPVGTAERKVARHQRHKHGG. Positions 469–479 are enriched in basic residues; it reads VARHQRHKHGG.

The protein belongs to the TRAFAC class OBG-HflX-like GTPase superfamily. OBG GTPase family. In terms of assembly, monomer. Mg(2+) is required as a cofactor.

The protein resides in the cytoplasm. Its function is as follows. An essential GTPase which binds GTP, GDP and possibly (p)ppGpp with moderate affinity, with high nucleotide exchange rates and a fairly low GTP hydrolysis rate. Plays a role in control of the cell cycle, stress response, ribosome biogenesis and in those bacteria that undergo differentiation, in morphogenesis control. The polypeptide is GTPase Obg (Mycobacterium leprae (strain Br4923)).